Here is a 197-residue protein sequence, read N- to C-terminus: Holliday junction branch migration complex subunit RuvA (197 aa).

Positions 1–64 are domain I; the sequence is MIGRLRGIVA…EDSVSLYGFL (64 aa). Residues 65–143 form a domain II region; the sequence is REGERRLFRD…QFGAGGALPT (79 aa). The interval 144-153 is flexible linker; the sequence is GSGPAPADPL. The domain III stretch occupies residues 153–197; it reads LSDATVALQQLGYKPAEAARMARDAFNEGDEVATVIRKALQSALR.

Belongs to the RuvA family. Homotetramer. Forms an RuvA(8)-RuvB(12)-Holliday junction (HJ) complex. HJ DNA is sandwiched between 2 RuvA tetramers; dsDNA enters through RuvA and exits via RuvB. An RuvB hexamer assembles on each DNA strand where it exits the tetramer. Each RuvB hexamer is contacted by two RuvA subunits (via domain III) on 2 adjacent RuvB subunits; this complex drives branch migration. In the full resolvosome a probable DNA-RuvA(4)-RuvB(12)-RuvC(2) complex forms which resolves the HJ.

It localises to the cytoplasm. Its function is as follows. The RuvA-RuvB-RuvC complex processes Holliday junction (HJ) DNA during genetic recombination and DNA repair, while the RuvA-RuvB complex plays an important role in the rescue of blocked DNA replication forks via replication fork reversal (RFR). RuvA specifically binds to HJ cruciform DNA, conferring on it an open structure. The RuvB hexamer acts as an ATP-dependent pump, pulling dsDNA into and through the RuvAB complex. HJ branch migration allows RuvC to scan DNA until it finds its consensus sequence, where it cleaves and resolves the cruciform DNA. The polypeptide is Holliday junction branch migration complex subunit RuvA (Stenotrophomonas maltophilia (strain K279a)).